Consider the following 437-residue polypeptide: uncharacterized protein (437 aa).

Phosphoserine occurs at positions 290 and 293. T296 is modified (phosphothreonine). Phosphoserine occurs at positions 418 and 428.

This is an uncharacterized protein from Schizosaccharomyces pombe (strain 972 / ATCC 24843) (Fission yeast).